Reading from the N-terminus, the 173-residue chain is Lipoprotein signal peptidase (173 aa).

3 helical membrane-spanning segments follow: residues 11–31, 69–89, and 93–113; these read FGLI…WIVT, TTRW…AFWM, and QAKG…GNIV. Residues Asp123 and Asp142 contribute to the active site. A helical transmembrane segment spans residues 134-154; that stretch reads PFMIFNVADACITIGVLLLVA.

It belongs to the peptidase A8 family.

It is found in the cell inner membrane. It carries out the reaction Release of signal peptides from bacterial membrane prolipoproteins. Hydrolyzes -Xaa-Yaa-Zaa-|-(S,diacylglyceryl)Cys-, in which Xaa is hydrophobic (preferably Leu), and Yaa (Ala or Ser) and Zaa (Gly or Ala) have small, neutral side chains.. It functions in the pathway protein modification; lipoprotein biosynthesis (signal peptide cleavage). Its function is as follows. This protein specifically catalyzes the removal of signal peptides from prolipoproteins. The polypeptide is Lipoprotein signal peptidase (Sphingopyxis alaskensis (strain DSM 13593 / LMG 18877 / RB2256) (Sphingomonas alaskensis)).